Here is a 506-residue protein sequence, read N- to C-terminus: Steroid (22S)-hydroxylase (506 aa).

Residues 12–32 (LLFFLPFILLALLTFYTTTVA) traverse the membrane as a helical segment. C449 contacts heme.

This sequence belongs to the cytochrome P450 family. Heme serves as cofactor. In terms of tissue distribution, highly expressed in roots and leaf blades. Expressed in shoot apex, stems, leaf sheaths, inflorescences and flowers.

The protein resides in the membrane. The enzyme catalyses a C28-steroid + reduced [NADPH--hemoprotein reductase] + O2 = a (22S)-22-hydroxy C28-steroid + oxidized [NADPH--hemoprotein reductase] + H2O + H(+). It carries out the reaction campesterol + reduced [NADPH--hemoprotein reductase] + O2 = (22S)-22-hydroxycampesterol + oxidized [NADPH--hemoprotein reductase] + H2O + H(+). It catalyses the reaction campestanol + reduced [NADPH--hemoprotein reductase] + O2 = 6-deoxycathasterone + oxidized [NADPH--hemoprotein reductase] + H2O + H(+). It functions in the pathway plant hormone biosynthesis; brassinosteroid biosynthesis. Catalyzes the C22-alpha-hydroxylation step in brassinosteroid biosynthesis, which is the rate-limiting step in this biosynthetic pathway. Catalyzes the conversion of campesterol (CR) to (22S)-22-hydroxycampesterol (22-OHCR, 22-hydroxyCR) and of campestanol (CN) to 6-deoxycathasterone (6-deoxoCT). Required for auxin responses involved in the regulation of epidermal cells length of the lamina joint. This is Steroid (22S)-hydroxylase from Oryza sativa subsp. japonica (Rice).